We begin with the raw amino-acid sequence, 192 residues long: MNKRDYMNTSVQEPPLDYSFRSIHVIQDLVNEEPRTGLRPLKRSKSGKSLTQSLWLNNNVLNDLRDFNQVASQLLEHPENLAWIDLSFNDLTSIDPVLTTFFNLSVLYLHGNSIQRLGEVNKLAVLPRLRSLTLHGNPMEEEKGYRQYVLCTLSRITTFDFSGVTKADRTTAEVWKRMNIKPKKAWTKQNTL.

3 LRR repeats span residues 49-71 (SLTQ…NQVA), 80-101 (NLAW…LTTF), and 103-124 (NLSV…NKLA). Residues 137–175 (NPMEEEKGYRQYVLCTLSRITTFDFSGVTKADRTTAEVW) enclose the LRRCT domain.

The protein localises to the cytoplasm. This Homo sapiens (Human) protein is Leucine-rich repeat-containing protein 51.